The primary structure comprises 104 residues: Large ribosomal subunit protein bL21 (104 aa).

Belongs to the bacterial ribosomal protein bL21 family. As to quaternary structure, part of the 50S ribosomal subunit. Contacts protein L20.

This protein binds to 23S rRNA in the presence of protein L20. In Francisella tularensis subsp. tularensis (strain FSC 198), this protein is Large ribosomal subunit protein bL21.